Reading from the N-terminus, the 226-residue chain is uncharacterized protein (226 aa).

Positions 4–226 (LQFQQVGYWY…FTVKENVAVV (223 aa)) constitute an ABC transporter domain. 38–45 (GTSGTGKT) is a binding site for ATP.

Belongs to the ABC transporter superfamily.

This is an uncharacterized protein from Bacillus subtilis (strain 168).